A 639-amino-acid chain; its full sequence is 3D-(3,5/4)-trihydroxycyclohexane-1,2-dione hydrolase (639 aa).

Glu62 serves as a coordination point for thiamine diphosphate. Residues 438–518 (SLPGDLQRMW…INILLFDNCG (81 aa)) form a thiamine pyrophosphate binding region. Residues Asp489 and Asn516 each contribute to the Mg(2+) site.

Belongs to the TPP enzyme family. Requires Mg(2+) as cofactor. Thiamine diphosphate is required as a cofactor.

The catalysed reaction is 3D-3,5/4-trihydroxycyclohexane-1,2-dione + H2O = 5-deoxy-D-glucuronate + H(+). The protein operates within polyol metabolism; myo-inositol degradation into acetyl-CoA; acetyl-CoA from myo-inositol: step 3/7. Functionally, involved in the cleavage of the C1-C2 bond of 3D-(3,5/4)-trihydroxycyclohexane-1,2-dione (THcHDO) to yield 5-deoxy-glucuronate (5DG). This Clostridium perfringens (strain 13 / Type A) protein is 3D-(3,5/4)-trihydroxycyclohexane-1,2-dione hydrolase.